The chain runs to 254 residues: Casein kinase II subunit beta-2 (254 aa).

It belongs to the casein kinase 2 subunit beta family. In terms of assembly, tetramer composed of two alpha chains, one beta chain and one beta' chain. Phosphorylated by alpha subunit.

Its function is as follows. Regulatory subunit of casein kinase II/CK2. As part of the kinase complex regulates the basal catalytic activity of the alpha subunit a constitutively active serine/threonine-protein kinase that phosphorylates a large number of substrates containing acidic residues C-terminal to the phosphorylated serine or threonine. This is Casein kinase II subunit beta-2 from Schizosaccharomyces pombe (strain 972 / ATCC 24843) (Fission yeast).